The sequence spans 214 residues: Alpha-S1-casein (214 aa).

Residues 1-15 (MKLLILTCLVAVALA) form the signal peptide. Phosphoserine is present on residues Ser63, Ser79, Ser81, Ser82, Ser83, and Ser90. Repeats lie at residues 85-99 (EIVP…IQKE) and 125-140 (EIVP…SMKE).

It belongs to the alpha-casein family. As to expression, mammary gland specific. Secreted in milk.

The protein localises to the secreted. Its function is as follows. Important role in the capacity of milk to transport calcium phosphate. The protein is Alpha-S1-casein (CSN1S1) of Bubalus bubalis (Domestic water buffalo).